A 152-amino-acid polypeptide reads, in one-letter code: MMLYRIVMRRYLASTWTGYGAETYGGRWNHKGHAAIYLASSVSLAMLETLVHIQDSSTLSEFELFQIEIEDSNIMLLQPQDWPTNWRSDPAPATTMDIGTEWLESESSLGLLVPSTLVPTENNLLLNPRHKSFQTCLSSVQPLSFAFDPRLK.

It belongs to the MbcT/ParT/Res family. As to quaternary structure, homodimer. Forms a complex with cognate antitoxin Xre.

Its function is as follows. Toxic component of a type II toxin-antitoxin (TA) system. Expression in E.coli inhibits cell growth; bacteriostasis is neutralized by expression of cognate antitoxin Xre. Probably depletes intracellular NAD(+). This Yersinia enterocolitica serotype O:8 / biotype 1B (strain NCTC 13174 / 8081) protein is Toxin Res.